A 561-amino-acid chain; its full sequence is Acylcarnitine hydrolase (561 aa).

Residues 1–26 (MARKQPHSWLNAVLFGLLLILIHVWG) form the signal peptide. A disulfide bond links cysteine 97 and cysteine 125. Serine 230 serves as the catalytic Acyl-ester intermediate. A disulfide bridge connects residues cysteine 282 and cysteine 293. Residues glutamate 347 and histidine 459 each act as charge relay system in the active site.

Belongs to the type-B carboxylesterase/lipase family. In terms of tissue distribution, expressed in liver, stomach and kidney.

The protein localises to the microsome. Its subcellular location is the endoplasmic reticulum. It catalyses the reaction all-trans-retinyl hexadecanoate + H2O = all-trans-retinol + hexadecanoate + H(+). The enzyme catalyses an O-acyl-(R)-carnitine + H2O = (R)-carnitine + a fatty acid + H(+). In terms of biological role, hydrolase with high activity towards palmitoylcarnitine. Is also active with p-nitrophenylacetate and alpha-naphthylacetate. May also hydrolyze retinyl esters. This chain is Acylcarnitine hydrolase, found in Rattus norvegicus (Rat).